Consider the following 473-residue polypeptide: FAD-dependent monooxygeanse terM (473 aa).

A signal peptide spans 1 to 22 (MSENFKVLIIGGSVAGLTLALC). FAD contacts are provided by glutamate 34, glycine 48, arginine 107, aspartate 303, and alanine 316. A helical transmembrane segment spans residues 441–461 (VLYLICGALLAWWASGLVWHF).

This sequence belongs to the paxM FAD-dependent monooxygenase family. FAD is required as a cofactor.

The protein localises to the membrane. It functions in the pathway secondary metabolite biosynthesis. Functionally, FAD-dependent monooxygeanse; part of the gene cluster that mediates the biosynthesis of terpendoles, indole-diterpene (IDT) mycotoxins including terpendole I, terpendole K, terpendole C, as well as the kinesin Eg5 inhibitor terpendole E. Terpendoles biosynthesis begins with the synthesis of geranylgeranyl diphosphate (GGPP) by a yet unidentified GGPP synthase. Condensation of indole-3-glycerol phosphate with GGPP by the prenyltransferase terC then forms 3-geranylgeranylindole (3-GGI), followed by epoxidation and cyclization of this intermediate (by the FAD-dependent monooxygeanse terM and the terpene cyclase terB) to form paspaline. The cytochrome monooxygenase terQ then hydroxylates paspalline at C-11 to yield terpendole E. The cytochrome monooxygenase terP converts terpendole E to 13-desoxyterpendole I, and terQ converts 13-desoxyterpendole I into terpendole I. TerF and terK are required for conversion of terpendole I to terpendole C which is further converted to terpendole K. The polypeptide is FAD-dependent monooxygeanse terM (Tolypocladium album (Soil fungus)).